Here is a 567-residue protein sequence, read N- to C-terminus: ETHYLENE INSENSITIVE 3-like 3 protein (567 aa).

Positions Asn24 to Met44 form a coiled coil. Disordered regions lie at residues Lys55–Lys81 and Ile286–Leu393. The span at Glu69–Gln79 shows a compositional bias: basic and acidic residues. Residues Ser162 to Gln288 mediate DNA binding. Over residues Ile286–Thr299 the composition is skewed to polar residues. Basic and acidic residues predominate over residues Glu300 to Lys312. Basic residues predominate over residues Lys363–Ile372.

Belongs to the EIN3 family. Interacts with MYB72.

Its subcellular location is the nucleus. Probable transcription factor that may be involved in the ethylene response pathway. This chain is ETHYLENE INSENSITIVE 3-like 3 protein (EIL3), found in Arabidopsis thaliana (Mouse-ear cress).